The following is a 131-amino-acid chain: Small ribosomal subunit protein uS11 (131 aa).

The protein belongs to the universal ribosomal protein uS11 family. As to quaternary structure, part of the 30S ribosomal subunit. Interacts with proteins S7 and S18. Binds to IF-3.

In terms of biological role, located on the platform of the 30S subunit, it bridges several disparate RNA helices of the 16S rRNA. Forms part of the Shine-Dalgarno cleft in the 70S ribosome. In Exiguobacterium sibiricum (strain DSM 17290 / CCUG 55495 / CIP 109462 / JCM 13490 / 255-15), this protein is Small ribosomal subunit protein uS11.